The chain runs to 1009 residues: Adhesion G-protein coupled receptor G2 (1009 aa).

The first 37 residues, 1–37, serve as a signal peptide directing secretion; the sequence is MLFSGGQYSPVGRPEEVLLIYKIFLVIICFHVILVTS. Topologically, residues 38–617 are extracellular; that stretch reads LKENGNSSLL…SRTSLPPSQM (580 aa). N-linked (GlcNAc...) asparagine glycans are attached at residues asparagine 43, asparagine 77, asparagine 91, asparagine 103, asparagine 109, asparagine 127, asparagine 136, asparagine 154, asparagine 178, and asparagine 186. 2 disordered regions span residues 279–305 and 325–346; these read MTPS…ASSP and SHTL…PSVP. Polar residues predominate over residues 280-293; it reads TPSTPSLTQESNLP. N-linked (GlcNAc...) asparagine glycosylation is found at asparagine 362, asparagine 427, asparagine 448, asparagine 453, asparagine 520, asparagine 534, asparagine 539, asparagine 543, and asparagine 589. Residues 453 to 611 form the GAIN-B domain; that stretch reads NTTTFAAQDP…GILLDLSRTS (159 aa). Intrachain disulfides connect cysteine 562/cysteine 593 and cysteine 581/cysteine 595. Positions 562-611 are GPS; the sequence is CVFWDLGRNGGKGGWSSDGCSVKDKRMNETICTCSHLTSFGILLDLSRTS. The segment at 600-611 is stachel; that stretch reads SFGILLDLSRTS. Residues 618-640 form a helical membrane-spanning segment; that stretch reads MALTFITYIGCGLSSIFLSVTLV. At 641–655 the chain is on the cytoplasmic side; it reads TYIAFEKIRRDYPSK. The helical transmembrane segment at 656–679 threads the bilayer; sequence ILIQLCAALLLLNLIFLLDSWIAL. Residues 680–683 are Extracellular-facing; sequence YNTR. Residues 684-709 form a helical membrane-spanning segment; it reads GFCIAVAVFLHYFLLVSFTWMGLEAF. Cysteine 686 and cysteine 770 are joined by a disulfide. Residues 710 to 728 lie on the Cytoplasmic side of the membrane; that stretch reads HMYLALVKVFNTYIRKYIL. A helical membrane pass occupies residues 729–751; that stretch reads KFCIVGWGIPAVVVSIVLTISPD. At 752 to 776 the chain is on the extracellular side; sequence NYGIGSYGKFPNGTPDDFCWINSNV. Residues 777–802 form a helical membrane-spanning segment; that stretch reads VFYITVVGYFCVIFLLNVSMFIVVLV. The Cytoplasmic segment spans residues 803-823; sequence QLCRIKKKKQLGAQRKTSIQD. A helical membrane pass occupies residues 824-845; sequence LRSIAGLTFLLGITWGFAFFAW. Residues 846–850 are Extracellular-facing; the sequence is GPVNV. Asparagine 849 carries N-linked (GlcNAc...) asparagine glycosylation. A helical membrane pass occupies residues 851 to 872; sequence TFMYLFAIFNTLQGFFIFIFYC. Asparagine 860 is a binding site for 3beta-hydroxyandrost-5-en-17-one. Residues 873–1009 lie on the Cytoplasmic side of the membrane; that stretch reads AAKENVRKQW…RGSLHFIEQM (137 aa). The residue at position 1002 (serine 1002) is a Phosphoserine.

Belongs to the G-protein coupled receptor 2 family. Adhesion G-protein coupled receptor (ADGR) subfamily. Heterodimer of 2 chains generated by proteolytic processing; the large extracellular N-terminal fragment and the membrane-bound C-terminal fragment predominantly remain associated and non-covalently linked. Interacts with CFTR. Proteolytically cleaved into 2 subunits, an extracellular subunit and a seven-transmembrane subunit. Post-translationally, highly glycosylated. In terms of tissue distribution, epididymis-specific expression (at protein level). Associated with apical membranes of efferent ductule and proximal epididymal duct epithelia. Mainly expressed in the nonciliated principal cells of the proximal excurrent ducts.

Its subcellular location is the apical cell membrane. With respect to regulation, forms a heterodimer of 2 chains generated by proteolytic processing that remain associated through non-covalent interactions mediated by the GAIN-B domain. In the inactivated receptor, the Stachel sequence (also named stalk) is embedded in the GAIN-B domain, where it adopts a beta-strand conformation. On activation, the Stachel moves into the 7 transmembrane region and adopts a twisted hook-shaped configuration that forms contacts within the receptor, leading to coupling of a G-alpha protein, which activates signaling. The cleaved GAIN-B and N-terminal domains can then dissociate from the rest of the receptor. Deoxycorticosterone (DOC) acts as an antagonist of ADGRG2. In terms of biological role, adhesion G-protein coupled receptor (aGPCR) for steroid hormones, such as dehydroepiandrosterone (DHEA; also named 3beta-hydroxyandrost-5-en-17-one) and androstenedione. Involved in a signal transduction pathway controlling epididymal function and male fertility. Ligand binding causes a conformation change that triggers signaling via guanine nucleotide-binding proteins (G proteins) and modulates the activity of downstream effectors, such as adenylate cyclase. ADGRG2 is coupled to G(s) G proteins and mediates activation of adenylate cyclase activity. Also able to couple with G(q) G proteins in vitro. May regulate fluid exchange within epididymis. In Mus musculus (Mouse), this protein is Adhesion G-protein coupled receptor G2.